Here is a 312-residue protein sequence, read N- to C-terminus: Pimeloyl-[acyl-carrier protein] methyl ester esterase (312 aa).

The region spanning 17–241 is the AB hydrolase-1 domain; that stretch reads VYLIHGWGAN…KAAHAPFLSH (225 aa). Substrate contacts are provided by residues tryptophan 23, 83 to 84, and 145 to 149; these read SL and FLQLQ. Serine 83 serves as the catalytic Nucleophile. Active-site residues include aspartate 207 and histidine 235. Histidine 235 provides a ligand contact to substrate.

The protein belongs to the AB hydrolase superfamily. Carboxylesterase BioH family. As to quaternary structure, monomer.

The protein resides in the cytoplasm. It carries out the reaction 6-carboxyhexanoyl-[ACP] methyl ester + H2O = 6-carboxyhexanoyl-[ACP] + methanol + H(+). The protein operates within cofactor biosynthesis; biotin biosynthesis. In terms of biological role, the physiological role of BioH is to remove the methyl group introduced by BioC when the pimeloyl moiety is complete. It allows to synthesize pimeloyl-ACP via the fatty acid synthetic pathway through the hydrolysis of the ester bonds of pimeloyl-ACP esters. The protein is Pimeloyl-[acyl-carrier protein] methyl ester esterase of Neisseria meningitidis serogroup A / serotype 4A (strain DSM 15465 / Z2491).